The sequence spans 102 residues: Citrate lyase acyl carrier protein (102 aa).

O-(phosphoribosyl dephospho-coenzyme A)serine is present on S14.

This sequence belongs to the CitD family. Oligomer with a subunit composition of (alpha,beta,gamma)6.

Its subcellular location is the cytoplasm. Functionally, covalent carrier of the coenzyme of citrate lyase. The sequence is that of Citrate lyase acyl carrier protein from Streptococcus equi subsp. zooepidemicus (strain MGCS10565).